Consider the following 360-residue polypeptide: Photosystem II protein D1 (360 aa).

The next 3 membrane-spanning stretches (helical) occupy residues 29-46 (YIGW…TATS), 118-133 (HFLT…EWEL), and 142-156 (WISV…AAAA). His118 serves as a coordination point for chlorophyll a. Tyr126 contributes to the pheophytin a binding site. Positions 170 and 189 each coordinate [CaMn4O5] cluster. A helical transmembrane segment spans residues 197–218 (FHQLGVAGVFGGSLFSAMHGSL). Chlorophyll a is bound at residue His198. Residues His215 and 264-265 (SF) contribute to the a quinone site. Position 215 (His215) interacts with Fe cation. Position 272 (His272) interacts with Fe cation. The chain crosses the membrane as a helical span at residues 274–288 (FLGLWPVVGIWLTAL). The [CaMn4O5] cluster site is built by His332, Glu333, Asp342, and Ala344. A propeptide spanning residues 345–360 (SGESLPVALTAPAVNG) is cleaved from the precursor.

Belongs to the reaction center PufL/M/PsbA/D family. As to quaternary structure, PSII is composed of 1 copy each of membrane proteins PsbA, PsbB, PsbC, PsbD, PsbE, PsbF, PsbH, PsbI, PsbJ, PsbK, PsbL, PsbM, PsbT, PsbX, PsbY, PsbZ, Psb30/Ycf12, at least 3 peripheral proteins of the oxygen-evolving complex and a large number of cofactors. It forms dimeric complexes. Requires The D1/D2 heterodimer binds P680, chlorophylls that are the primary electron donor of PSII, and subsequent electron acceptors. It shares a non-heme iron and each subunit binds pheophytin, quinone, additional chlorophylls, carotenoids and lipids. D1 provides most of the ligands for the Mn4-Ca-O5 cluster of the oxygen-evolving complex (OEC). There is also a Cl(-1) ion associated with D1 and D2, which is required for oxygen evolution. The PSII complex binds additional chlorophylls, carotenoids and specific lipids. as cofactor. In terms of processing, tyr-161 forms a radical intermediate that is referred to as redox-active TyrZ, YZ or Y-Z. C-terminally processed by CTPA; processing is essential to allow assembly of the oxygen-evolving complex and thus photosynthetic growth.

It is found in the plastid. The protein resides in the chloroplast thylakoid membrane. It carries out the reaction 2 a plastoquinone + 4 hnu + 2 H2O = 2 a plastoquinol + O2. In terms of biological role, photosystem II (PSII) is a light-driven water:plastoquinone oxidoreductase that uses light energy to abstract electrons from H(2)O, generating O(2) and a proton gradient subsequently used for ATP formation. It consists of a core antenna complex that captures photons, and an electron transfer chain that converts photonic excitation into a charge separation. The D1/D2 (PsbA/PsbD) reaction center heterodimer binds P680, the primary electron donor of PSII as well as several subsequent electron acceptors. The sequence is that of Photosystem II protein D1 from Porphyra purpurea (Red seaweed).